Here is a 316-residue protein sequence, read N- to C-terminus: Cuticle collagen 13 (316 aa).

An N-terminal signal peptide occupies residues 1–36; it reads MSEDLKQIAQETESLRKVAFFGIAVSTIATLTAIIA. Composition is skewed to low complexity over residues 127 to 157 and 183 to 204; these read SGAAGPAGSPGQDGAPGNDGAPGAPGNPGQD and APGQKGPSGAPGAPGQSGGAAL. A disordered region spans residues 127–316; that stretch reads SGAAGPAGSP…CPPPRTAPGY (190 aa). Triple-helical region regions lie at residues 128–157, 176–202, 206–235, 240–266, and 269–304; these read GAAGPAGSPGQDGAPGNDGAPGAPGNPGQD, GPPGPSGAPGQKGPSGAPGAPGQSGGA, GPPGPAGPPGPAGQPGSNGNAGAPGAPGQV, GTPGPAGPPGSPGPAGAPGQPGQAGSS, and GGPGPQGDAGAPGAPGAPGQAGAPGQDGESGSEGAC. Residues 205–217 show a composition bias toward pro residues; it reads PGPPGPAGPPGPA. The segment covering 219–234 has biased composition (low complexity); the sequence is QPGSNGNAGAPGAPGQ. Pro residues predominate over residues 241-251; the sequence is TPGPAGPPGSP. Low complexity-rich tracts occupy residues 256–266 and 276–295; these read APGQPGQAGSS and DAGAPGAPGAPGQAGAPGQD. Residues 307 to 316 show a composition bias toward pro residues; the sequence is CPPPRTAPGY.

It belongs to the cuticular collagen family. As to quaternary structure, collagen polypeptide chains are complexed within the cuticle by disulfide bonds and other types of covalent cross-links.

Nematode cuticles are composed largely of collagen-like proteins. The cuticle functions both as an exoskeleton and as a barrier to protect the worm from its environment. This Caenorhabditis elegans protein is Cuticle collagen 13 (col-13).